We begin with the raw amino-acid sequence, 306 residues long: Pantothenate kinase (306 aa).

Position 91–98 (91–98 (GSVAVGKS)) interacts with ATP.

Belongs to the prokaryotic pantothenate kinase family.

Its subcellular location is the cytoplasm. The catalysed reaction is (R)-pantothenate + ATP = (R)-4'-phosphopantothenate + ADP + H(+). The protein operates within cofactor biosynthesis; coenzyme A biosynthesis; CoA from (R)-pantothenate: step 1/5. In Streptococcus pneumoniae serotype 2 (strain D39 / NCTC 7466), this protein is Pantothenate kinase.